A 575-amino-acid polypeptide reads, in one-letter code: Pre-hexon-linking protein IIIa (575 aa).

The peripentonal hexon-tethering domain stretch occupies residues 1–95 (MTSSDTFLAL…DLLNRAYTWN (95 aa)). Positions 129–243 (ANASLLTQFF…FYDYGAMEPG (115 aa)) are binding to hexon-linking protein. S497 bears the Phosphoserine; by host mark. The propeptide occupies 515-575 (GGPGFFASLR…SRRGRKLRFY (61 aa)). The tract at residues 525–549 (PSIGSRQPTGTAVGLRPTTPYSGSG) is disordered.

It belongs to the adenoviridae hexon-linking protein IIIa family. As to quaternary structure, interacts with hexon proteins; this interaction tethers the peripentonal hexons to hexons situated in the facet. Interacts with the penton protein (via N-terminus). Interacts with packaging protein 3; this interaction is required to promote correct genome packaging. Cleaved near the C-terminus by the viral protease during virion maturation to form the mature protein.

Its subcellular location is the virion. The protein localises to the host nucleus. Its function is as follows. Structural component of the virion that acts as a cement protein on the capsid exterior which mediates the interactions between the hexons, including the peripentonal hexons, and reaches all the way to the penton vertices. Two hexon linking proteins IIIa, one from each facet, stabilize the unique edge interface between a pair of facets. As the virus enters the host cell, hexon linking proteins IIIa are shed concomitant with virion acidification in the endosome. During virus assembly, seems to play a role in the serotype specificity of the packaging of viral DNA via its interaction with packaging protein 3. This is Pre-hexon-linking protein IIIa from Galliformes (FAdV-1).